Reading from the N-terminus, the 207-residue chain is Dephospho-CoA kinase (207 aa).

In terms of domain architecture, DPCK spans 4–204 (VVGLTGGIGS…HLYLQFAEIF (201 aa)). An ATP-binding site is contributed by 12-17 (GSGKST).

Belongs to the CoaE family.

The protein resides in the cytoplasm. The catalysed reaction is 3'-dephospho-CoA + ATP = ADP + CoA + H(+). The protein operates within cofactor biosynthesis; coenzyme A biosynthesis; CoA from (R)-pantothenate: step 5/5. Functionally, catalyzes the phosphorylation of the 3'-hydroxyl group of dephosphocoenzyme A to form coenzyme A. The chain is Dephospho-CoA kinase from Aggregatibacter actinomycetemcomitans (Actinobacillus actinomycetemcomitans).